We begin with the raw amino-acid sequence, 1845 residues long: Histone-lysine N-methyltransferase, H3 lysine-79 specific (1845 aa).

Positions 1–44 (MSTNSTPRKQKLSNSKSLQNSPISPTVKKTNSFPLGNNIPTNIN) are enriched in polar residues. 8 disordered regions span residues 1–67 (MSTN…NGIG), 83–306 (PPLP…NKWT), 450–470 (SHDI…NKNK), 486–571 (QKLK…TERK), 585–681 (RKER…NDSY), 741–767 (GETF…KKIE), 862–881 (QTTK…AETE), and 963–1102 (KDNP…SNSL). Low complexity-rich tracts occupy residues 52-67 (NNSN…NGIG), 90-162 (SSSS…QQEP), 191-226 (PSTP…SNNS), and 239-263 (NNNN…NNNN). The span at 268-280 (VIDDDDDDDDDEG) shows a compositional bias: acidic residues. A compositionally biased stretch (polar residues) spans 282–294 (SIKSTHTSTQSTP). Positions 295–304 (IRDRRQRDNK) are enriched in basic and acidic residues. A compositionally biased stretch (low complexity) spans 453–464 (INNNNNNNNNNK). The segment covering 585–679 (RKERERKERK…IEKERREKND (95 aa)) has biased composition (basic and acidic residues). Residues 625-639 (KKKEKEKEKEKEKEK) are required for interaction with nucleosomes and DNA. 4 stretches are compositionally biased toward low complexity: residues 750–763 (NNNN…NNNN), 862–877 (QTTK…TTTT), 972–1011 (NNNR…RNNN), and 1020–1067 (NNNN…NNTI). Basic and acidic residues predominate over residues 1069–1080 (KKIETIKKDINK). Over residues 1084-1102 (KTTTTTSSSSSSTSSSNSL) the composition is skewed to low complexity. Positions 1125 to 1446 (FDVGIGVPVT…KDSDIVTDQT (322 aa)) constitute a DOT1 domain. S-adenosyl-L-methionine-binding positions include 1251–1254 (YGEA), 1274–1283 (FCDIGCGIGN), and glutamate 1300. 5 disordered regions span residues 1463-1559 (LQLF…NKPI), 1610-1661 (RISP…SSND), 1735-1762 (HQKS…KKEQ), 1772-1791 (NYNN…NHNN), and 1799-1845 (TDLI…DNNK). Low complexity-rich tracts occupy residues 1467 to 1522 (SSSS…TPNS), 1541 to 1556 (NNNN…NSNN), and 1610 to 1642 (RISP…SSSD). A compositionally biased stretch (acidic residues) spans 1643 to 1656 (NENDDDNGDDEDDS). Residues 1745-1759 (RLSRKQKKLAKKNKK) show a composition bias toward basic residues. Low complexity-rich tracts occupy residues 1799–1817 (TDLI…INND) and 1835–1845 (KDYNNINDNNK).

This sequence belongs to the class I-like SAM-binding methyltransferase superfamily. DOT1 family.

Its subcellular location is the nucleus. It catalyses the reaction L-lysyl(79)-[histone H3] + 3 S-adenosyl-L-methionine = N(6),N(6),N(6)-trimethyl-L-lysyl(79)-[histone H3] + 3 S-adenosyl-L-homocysteine + 3 H(+). In terms of biological role, histone methyltransferase that specifically methylates histone H3 to form H3K79me. This methylation is required for telomere silencing, correct growth and development, and for resistance to DNA damage induced by UV LIGHT. This Dictyostelium discoideum (Social amoeba) protein is Histone-lysine N-methyltransferase, H3 lysine-79 specific.